A 561-amino-acid chain; its full sequence is DNA ligase B (561 aa).

The active-site N6-AMP-lysine intermediate is the lysine 125.

The protein belongs to the NAD-dependent DNA ligase family. LigB subfamily.

The enzyme catalyses NAD(+) + (deoxyribonucleotide)n-3'-hydroxyl + 5'-phospho-(deoxyribonucleotide)m = (deoxyribonucleotide)n+m + AMP + beta-nicotinamide D-nucleotide.. Its function is as follows. Catalyzes the formation of phosphodiester linkages between 5'-phosphoryl and 3'-hydroxyl groups in double-stranded DNA using NAD as a coenzyme and as the energy source for the reaction. This Salmonella schwarzengrund (strain CVM19633) protein is DNA ligase B.